We begin with the raw amino-acid sequence, 242 residues long: MNRCWALFLSLCCYLRLVSAEGDPIPEELYEMLSDHSIRSFDDLQRLLHGASVDEDGAELDLNLTRSHSGDELESLSRGRRSLGSPTVAEPAMIAECKTRTEVFEISRRLIDRTNANFLVWPPCVEVQRCSGCCNNRNVQCRPTQVQLRPVQVRKIEIVRKKPTFKKATVTLEDHLACKCETVVAARPVTRTPGSSQDLRAAKTPQTRVTIRTVRVRRPPKGKHRKFKHTHDKKALKETLGA.

Residues 1 to 20 (MNRCWALFLSLCCYLRLVSA) form the signal peptide. A propeptide spans 21–81 (EGDPIPEELY…ELESLSRGRR (61 aa)) (removed in mature form). N-linked (GlcNAc...) asparagine glycosylation occurs at Asn63. 3 disulfides stabilise this stretch: Cys97–Cys141, Cys130–Cys178, and Cys134–Cys180. Positions 219–232 (PPKGKHRKFKHTHD) are enriched in basic residues. The interval 219–242 (PPKGKHRKFKHTHDKKALKETLGA) is disordered. Basic and acidic residues predominate over residues 233-242 (KKALKETLGA).

This sequence belongs to the PDGF/VEGF growth factor family. In terms of assembly, antiparallel homodimer; disulfide-linked. Antiparallel heterodimer with PDGFA; disulfide-linked. The PDGFB homodimer interacts with PDGFRA and PDGFRB homodimers, and with heterodimers formed by PDGFRA and PDGFRB. The heterodimer composed of PDGFA and PDGFB interacts with PDGFRB homodimers, and with heterodimers formed by PDGFRA and PDGFRB. Interacts with XLKD1. Interacts with LRP1. Interacts with SORL1 (via the N-terminal ectodomain). Interacts with CD82; this interaction inhibits PDGFB-mediated signaling pathway.

It localises to the secreted. Its function is as follows. Growth factor that plays an essential role in the regulation of embryonic development, cell proliferation, cell migration, survival and chemotaxis. Potent mitogen for cells of mesenchymal origin. Required for normal proliferation and recruitment of pericytes and vascular smooth muscle cells in the central nervous system, skin, lung, heart and placenta. Required for normal blood vessel development, and for normal development of kidney glomeruli. Plays an important role in wound healing. Signaling is modulated by the formation of heterodimers with PDGFA. This is Platelet-derived growth factor subunit B (PDGFB) from Canis lupus familiaris (Dog).